The following is a 235-amino-acid chain: Succinate dehydrogenase iron-sulfur subunit (235 aa).

Positions 53, 58, and 73 each coordinate [2Fe-2S] cluster. A 4Fe-4S ferredoxin-type domain is found at 133-163 (ERAKLDGLYECILCACCSSSCPSYWWNPDKF). [4Fe-4S] cluster-binding residues include Cys143, Cys146, and Cys149. Cys153 contacts [3Fe-4S] cluster. Trp158 is a binding site for a ubiquinone. [3Fe-4S] cluster contacts are provided by Cys200 and Cys206. Cys210 lines the [4Fe-4S] cluster pocket.

It belongs to the succinate dehydrogenase/fumarate reductase iron-sulfur protein family. As to quaternary structure, part of an enzyme complex containing four subunits: a flavoprotein, an iron-sulfur protein, cytochrome b-556 and a hydrophobic protein. It depends on [2Fe-2S] cluster as a cofactor. [3Fe-4S] cluster is required as a cofactor. The cofactor is [4Fe-4S] cluster.

It carries out the reaction a quinone + succinate = fumarate + a quinol. The protein operates within carbohydrate metabolism; tricarboxylic acid cycle; fumarate from succinate (bacterial route): step 1/1. The chain is Succinate dehydrogenase iron-sulfur subunit (sdhB) from Coxiella burnetii (strain RSA 493 / Nine Mile phase I).